Here is a 405-residue protein sequence, read N- to C-terminus: Probable tRNA sulfurtransferase (405 aa).

One can recognise a THUMP domain in the interval 60-165 (TAVMDRLKGV…LNGVFLSGQT (106 aa)). ATP is bound by residues 183-184 (ML), 208-209 (HF), Arg-265, Gly-287, and Gln-296.

Belongs to the ThiI family.

It is found in the cytoplasm. It catalyses the reaction [ThiI sulfur-carrier protein]-S-sulfanyl-L-cysteine + a uridine in tRNA + 2 reduced [2Fe-2S]-[ferredoxin] + ATP + H(+) = [ThiI sulfur-carrier protein]-L-cysteine + a 4-thiouridine in tRNA + 2 oxidized [2Fe-2S]-[ferredoxin] + AMP + diphosphate. The catalysed reaction is [ThiS sulfur-carrier protein]-C-terminal Gly-Gly-AMP + S-sulfanyl-L-cysteinyl-[cysteine desulfurase] + AH2 = [ThiS sulfur-carrier protein]-C-terminal-Gly-aminoethanethioate + L-cysteinyl-[cysteine desulfurase] + A + AMP + 2 H(+). It functions in the pathway cofactor biosynthesis; thiamine diphosphate biosynthesis. In terms of biological role, catalyzes the ATP-dependent transfer of a sulfur to tRNA to produce 4-thiouridine in position 8 of tRNAs, which functions as a near-UV photosensor. Also catalyzes the transfer of sulfur to the sulfur carrier protein ThiS, forming ThiS-thiocarboxylate. This is a step in the synthesis of thiazole, in the thiamine biosynthesis pathway. The sulfur is donated as persulfide by IscS. The polypeptide is Probable tRNA sulfurtransferase (Levilactobacillus brevis (strain ATCC 367 / BCRC 12310 / CIP 105137 / JCM 1170 / LMG 11437 / NCIMB 947 / NCTC 947) (Lactobacillus brevis)).